Reading from the N-terminus, the 107-residue chain is RecQ-mediated genome instability protein 2 homolog (107 aa).

Belongs to the RMI2 family. As to quaternary structure, component of the RMI complex, containing at least top-3, rmh-1 and rmh-2. Component of the BTR double Holliday Junction dissolution complex composed of at least him-6, top-3, rmh-1 and rmif-2, which is involved in double strand break repair in the germline. Interacts with rmh-1; the interaction is direct and is required for mutual stability and localization at nuclear foci. Expressed in the germline.

The protein resides in the nucleus. Functionally, essential component of the RMI complex, a complex that plays an important role in the processing of homologous recombination intermediates. Component of the BTR double Holliday Junction dissolution complex, which is involved in homologous recombination during meiotic double strand break in the germline. Plays a role in double strand break repair by positively regulating the accumulation of rad-51 at double strand breaks. Stabilizes and positively regulates the localization of the BTR double Holliday Junction dissolution complex components rmh-1, him-6 and top-3 at nuclear foci during meiotic recombination. Positively regulates meiotic recombination, chiasma formation, and chromosome segregation in meiosis. Positively regulates DNA crossover formation and positioning on chromosome arms (away from the chromosome center) during homologous recombination. The sequence is that of RecQ-mediated genome instability protein 2 homolog from Caenorhabditis elegans.